A 4830-amino-acid chain; its full sequence is Siderophore peptide synthetase fer3 (4830 aa).

Positions 197 to 623 are adenylation 1; sequence LDQAEKFPDR…LGRMNAEQVK (427 aa). In terms of domain architecture, Carrier 1 spans 751–833; that stretch reads ANEDPVTQAL…DLIPLLSDTT (83 aa). O-(pantetheine 4'-phosphoryl)serine is present on serine 788. The condensation 1 stretch occupies residues 879-1317; that stretch reads QKIFPTTATQ…HSLMREPETT (439 aa). The tract at residues 1358 to 1781 is adenylation 2; sequence FENKAATEPE…IGRRDDLVKL (424 aa). The Carrier 2 domain maps to 1929-2005; the sequence is GEDGDLQCQV…MLIRGLATKT (77 aa). An O-(pantetheine 4'-phosphoryl)serine modification is found at serine 1966. Residues 2048-2503 form a condensation 2 region; the sequence is IPCSTLQEGM…LLDQVVSLLT (456 aa). Positions 2573–2977 are adenylation 3; sequence AGTPETACIN…LGRRDEQEKI (405 aa). In terms of domain architecture, Carrier 3 spans 3122–3198; the sequence is RPLSSLEREI…DIAAELSDSK (77 aa). Serine 3159 is subject to O-(pantetheine 4'-phosphoryl)serine. The tract at residues 3232–3621 is condensation 3; it reads KVLPCLPSQE…RDRDELRISA (390 aa). The region spanning 3685-3760 is the Carrier 4 domain; it reads TAAEEQIRDL…GLSKLLDQRQ (76 aa). An O-(pantetheine 4'-phosphoryl)serine modification is found at serine 3720. Positions 3779–4199 are condensation 4; it reads RYKATPLQAG…GVQIKAGASD (421 aa). In terms of domain architecture, Carrier 5 spans 4264 to 4340; it reads SLSTAEQDIV…RLTVATETRS (77 aa). Position 4301 is an O-(pantetheine 4'-phosphoryl)serine (serine 4301). A condensation 5 region spans residues 4381-4708; the sequence is VLPLLTGQQQ…DLVSRAEHQQ (328 aa).

This sequence belongs to the NRP synthetase family.

It participates in siderophore biosynthesis. Functionally, nonribosomal peptide synthetase; part of the gene cluster that mediates the biosynthesis of siderophore ferrichrome A which is contributing to organismal virulence. The first step of ferrichrome A biosynthesis is performed by the HMG-CoA synthase hcs1 which catalyzes the generation of HMG-CoA and CoA using acetoacetyl-CoA and acetyl-CoA as substrates. The enoyl-CoA isomerase/hydratase fer4 then catalyzes the conversion of hcs1-produced HMG-CoA to methylglutaconyl-CoA. The acyltransferase fer5 then fuses the fer4-generated methylglutaconyl-CoA with sid1-generated hydroxyornithine to yield methylglutaconyl hydroxyornithine. Methylglutaconyl hydroxyornithine is then available for use by the NRPS fer3 to generate ferrichrome A. The sequence is that of Siderophore peptide synthetase fer3 from Mycosarcoma maydis (Corn smut fungus).